Here is a 305-residue protein sequence, read N- to C-terminus: Putative S-adenosyl-L-methionine-dependent methyltransferase MAB_3787 (305 aa).

S-adenosyl-L-methionine-binding positions include Asp132 and 161 to 162 (DL).

The protein belongs to the UPF0677 family.

Exhibits S-adenosyl-L-methionine-dependent methyltransferase activity. This is Putative S-adenosyl-L-methionine-dependent methyltransferase MAB_3787 from Mycobacteroides abscessus (strain ATCC 19977 / DSM 44196 / CCUG 20993 / CIP 104536 / JCM 13569 / NCTC 13031 / TMC 1543 / L948) (Mycobacterium abscessus).